The following is a 525-amino-acid chain: ATP synthase subunit alpha (525 aa).

169-176 (GDRQTGKT) serves as a coordination point for ATP.

This sequence belongs to the ATPase alpha/beta chains family. As to quaternary structure, F-type ATPases have 2 components, CF(1) - the catalytic core - and CF(0) - the membrane proton channel. CF(1) has five subunits: alpha(3), beta(3), gamma(1), delta(1), epsilon(1). CF(0) has three main subunits: a(1), b(2) and c(9-12). The alpha and beta chains form an alternating ring which encloses part of the gamma chain. CF(1) is attached to CF(0) by a central stalk formed by the gamma and epsilon chains, while a peripheral stalk is formed by the delta and b chains.

The protein resides in the cell membrane. It carries out the reaction ATP + H2O + 4 H(+)(in) = ADP + phosphate + 5 H(+)(out). Produces ATP from ADP in the presence of a proton gradient across the membrane. The alpha chain is a regulatory subunit. The polypeptide is ATP synthase subunit alpha (Mesoplasma florum (strain ATCC 33453 / NBRC 100688 / NCTC 11704 / L1) (Acholeplasma florum)).